Reading from the N-terminus, the 300-residue chain is Mitochondrial carnitine/acylcarnitine carrier-like protein (300 aa).

Solcar repeat units lie at residues 2 to 93 (ADAW…MEGL), 102 to 201 (LTIS…FKRF), and 211 to 298 (LGQG…TRSS). The next 6 membrane-spanning stretches (helical) occupy residues 8-28 (LASG…FDTI), 64-84 (GLYK…AVLF), 108-128 (FVAG…TELI), 176-195 (GLFP…FAAY), 211-231 (LGQG…WGIV), and 273-292 (GFGP…FLAY).

It belongs to the mitochondrial carrier (TC 2.A.29) family. As to expression, high expression in cotyledons, leaves, flowers and developing siliques. Lower expression in roots and maturing siliques. Not detected in meristematic tissues.

The protein resides in the mitochondrion inner membrane. Involved in photorespiratory metabolism. Acts probably as a carrier for a glycine decarboxylase (GDC) cofactor or, alternatively, may act as a mitochondrial glycine shuttle. Involved in the transition from the embryonic stage to the juvenile autotrophic stage. This Arabidopsis thaliana (Mouse-ear cress) protein is Mitochondrial carnitine/acylcarnitine carrier-like protein (BOU).